The primary structure comprises 510 residues: Chromosomal replication initiator protein DnaA (510 aa).

Residues 1–107 form a domain I, interacts with DnaA modulators region; the sequence is MTNDPGSGFA…VRIAPPPADD (107 aa). The tract at residues 107–169 is domain II; sequence DDDDSVAAAV…ADTSASADGT (63 aa). The interval 119 to 168 is disordered; it reads PGLEASPETSQEVSDEIDDFGENAPKSRQSWPTHFKKRSTDADTSASADG. Positions 170-386 are domain III, AAA+ region; it reads SLNRRYTFDT…GALIRVTAFA (217 aa). The ATP site is built by glycine 214, glycine 216, lysine 217, and threonine 218. The segment at 387-510 is domain IV, binds dsDNA; that stretch reads SLNKTPIDKA…TTRIRQRSKR (124 aa).

The protein belongs to the DnaA family. In terms of assembly, oligomerizes as a right-handed, spiral filament on DNA at oriC.

The protein resides in the cytoplasm. Functionally, plays an essential role in the initiation and regulation of chromosomal replication. ATP-DnaA binds to the origin of replication (oriC) to initiate formation of the DNA replication initiation complex once per cell cycle. Binds the DnaA box (a 9 base pair repeat at the origin) and separates the double-stranded (ds)DNA. Forms a right-handed helical filament on oriC DNA; dsDNA binds to the exterior of the filament while single-stranded (ss)DNA is stabiized in the filament's interior. The ATP-DnaA-oriC complex binds and stabilizes one strand of the AT-rich DNA unwinding element (DUE), permitting loading of DNA polymerase. After initiation quickly degrades to an ADP-DnaA complex that is not apt for DNA replication. Binds acidic phospholipids. The polypeptide is Chromosomal replication initiator protein DnaA (Mycobacterium ulcerans (strain Agy99)).